Consider the following 412-residue polypeptide: DnaJ homolog subfamily A member 2 (412 aa).

In terms of domain architecture, J spans 8–70 (KLYDILGVPP…EKRELYDRYG (63 aa)). An N6-acetyllysine modification is found at K39. Phosphoserine occurs at positions 78 and 123. The CR-type zinc finger occupies 130–214 (GKTTKLQLSK…CEGKKVIKEV (85 aa)). K134 participates in a covalent cross-link: Glycyl lysine isopeptide (Lys-Gly) (interchain with G-Cter in SUMO2). C143 and C146 together coordinate Zn(2+). The stretch at 143–150 (CSACSGQG) is one CXXCXGXG motif repeat. An N6-acetyllysine modification is found at K152. Zn(2+) is bound by residues C159, C162, C186, C189, C202, and C205. CXXCXGXG motif repeat units follow at residues 159-166 (CSACRGRG), 186-193 (CSDCNGEG), and 202-209 (CKKCEGKK). The disordered stretch occupies residues 365–412 (IGETEEVELQEFDSTRGSGGGQRREAYNDSSDEESSSHHGPGVQCAHQ). Y391 carries the post-translational modification Phosphotyrosine. Phosphoserine occurs at positions 394 and 395. C409 is modified (cysteine methyl ester). C409 is lipidated: S-farnesyl cysteine. Positions 410-412 (AHQ) are cleaved as a propeptide — removed in mature form.

The protein localises to the membrane. Co-chaperone of Hsc70. Stimulates ATP hydrolysis and the folding of unfolded proteins mediated by HSPA1A/B (in vitro). The polypeptide is DnaJ homolog subfamily A member 2 (DNAJA2) (Homo sapiens (Human)).